The primary structure comprises 742 residues: Envelope glycoprotein H (742 aa).

Residues 1–29 form the signal peptide; it reads MRPGLPSYLIVLAVCLLSHLLSSRYGAEA. The Virion surface portion of the chain corresponds to 30–719; it reads ISEPLDKAFH…VVDATDSRLL (690 aa). N-linked (GlcNAc...) asparagine; by host glycans are attached at residues Asn-55, Asn-62, Asn-67, and Asn-192. The interval 217 to 280 is interaction with gL; that stretch reads YLIDELRYVK…QTEKHELLVL (64 aa). Residues Asn-641 and Asn-700 are each glycosylated (N-linked (GlcNAc...) asparagine; by host). The chain crosses the membrane as a helical span at residues 720 to 740; it reads MMSVYALSAIIGIYLLYRMLK. Residues 741–742 lie on the Intravirion side of the membrane; sequence TC.

The protein belongs to the herpesviridae glycoprotein H family. As to quaternary structure, interacts with glycoprotein L (gL); this interaction is necessary for the correct processing and cell surface expression of gH. The heterodimer gH/gL seems to interact with gB trimers during fusion. Forms the envelope pentamer complex (PC) composed of gH, gL, UL128, UL130, and UL131A. The pentamer interacts with host NRP2. Forms the envelope trimer complex composed of gH, gL, and gO. The trimer interacts with host PDGFRA. The trimer also interacts with host EPHA2. In terms of processing, N-glycosylated, O-glycosylated, and sialylated.

Its subcellular location is the virion membrane. It is found in the host cell membrane. It localises to the host endosome membrane. In terms of biological role, the heterodimer glycoprotein H-glycoprotein L is required for the fusion of viral and plasma membranes leading to virus entry into the host cell. Following initial binding to host receptor, membrane fusion is mediated by the fusion machinery composed of gB and the heterodimer gH/gL. May also be involved in the fusion between the virion envelope and the outer nuclear membrane during virion morphogenesis. In human cytomegalovirus, forms two distincts complexes to mediate viral entry, a trimer and a pentamer at the surface of the virion envelope. The gH-gL-gO trimer is required for infection in fibroblasts by interacting with host PDGFRA, and in glioblastoma cells by interacting with host EPHA2. The gH-gL-UL128-UL130-UL131A pentamer is essential for viral entry in epithelial, endothelial and myeloid cells via interaction with host NRP2. The protein is Envelope glycoprotein H of Human cytomegalovirus (strain Towne) (HHV-5).